We begin with the raw amino-acid sequence, 36 residues long: Lambda-hexatoxin-Hv1a (36 aa).

4 disulfide bridges follow: cysteine 3–cysteine 17, cysteine 10–cysteine 22, cysteine 13–cysteine 14, and cysteine 16–cysteine 33.

Belongs to the neurotoxin 11 (kappa toxin) family. Expressed by the venom gland.

It localises to the secreted. Functionally, this excitatory toxin inhibits insect calcium-activated potassium (KCa) channels (Slo-type). This Hadronyche versuta (Blue mountains funnel-web spider) protein is Lambda-hexatoxin-Hv1a.